A 327-amino-acid chain; its full sequence is MLSWLWNWWMWSGDNDNDAIAAEDRFNADDYKKYHINAQQWSHIVKWDSFKCNTHSFKYRYVHSDTNAKCYNVIDFCKGLEIAHDDILDCNWDGDQVYHLNEIVFHKQRSKRDLNSLGALFATKHGLLEILMRLNFANKSNALLHIQTEGERDDLRDKIESVLKHVKKLNANSEKFMVTHETFKNEVGNRFEQFELRLHELDAKLNMLQSAEKLKTAVVAESKNGTVTFPRDITKHQHLAVFSERIDDRIKLAFVLGQERHFRKRKMRFEDDMEVLYDGVHPNPLLAIQCINEKLYDKHYKIRKIAKRVIDVDCTPNVVREVIQEVL.

This is an uncharacterized protein from Lepidoptera (butterflies and moths).